The chain runs to 816 residues: Ribonucleoside-diphosphate reductase large subunit (816 aa).

Residues 1-92 enclose the ATP-cone domain; that stretch reads MYVVKRDGRQ…VSNLHKNTKK (92 aa). ATP-binding positions include 5–6, 11–17, Thr-53, and Asp-57; these read KR and ETVHFDK. Positions 202 and 217 each coordinate GDP. The cysteines at positions 218 and 444 are disulfide-linked. DTTP contacts are provided by residues 226–228, Lys-243, Arg-256, and 263–264; these read DSI and RG. Asn-427 contacts GDP. Asn-427 acts as the Proton acceptor in catalysis. Cys-429 functions as the Cysteine radical intermediate in the catalytic mechanism. GDP contacts are provided by residues Glu-431 and 623–626; that span reads TAST. The active-site Proton acceptor is the Glu-431.

Belongs to the ribonucleoside diphosphate reductase large chain family. Heterotetramer of two large/R1 and two small/R2 subunits. A radical transfer pathway may occur between 'Tyr-125' of protein R2 and R1. In terms of processing, contains a disulfide bonds. Binding of the substrate occurs primarily when the active-site cysteines are reduced. In terms of tissue distribution, highly expressed in actively growing tissues such as young leaves, shoot apices, inflorescences and carpels. Very low expression in cotyledons, adult and cauline leaves and senescent leaves.

It is found in the cytoplasm. The catalysed reaction is a 2'-deoxyribonucleoside 5'-diphosphate + [thioredoxin]-disulfide + H2O = a ribonucleoside 5'-diphosphate + [thioredoxin]-dithiol. Under complex allosteric control mediated by deoxynucleoside triphosphates and ATP binding to separate specificity and activation sites on the large subunit. The type of nucleotide bound at the specificity site determines substrate preference. It seems probable that ATP makes the enzyme reduce CDP and UDP, dGTP favors ADP reduction and dTTP favors GDP reduction. Stimulated by ATP and inhibited by dATP binding to the activity site. Functionally, provides the precursors necessary for DNA synthesis. Catalyzes the biosynthesis of deoxyribonucleotides from the corresponding ribonucleotides. R1 contains the binding sites for both substrates and allosteric effectors and carries out the actual reduction of the ribonucleotide. Ribonucleotide reductase (RNR) complex function is essential for efficient organellar DNA degradation in pollen. Involved in chloroplast division. The chain is Ribonucleoside-diphosphate reductase large subunit from Arabidopsis thaliana (Mouse-ear cress).